A 215-amino-acid chain; its full sequence is uncharacterized protein (215 aa).

A signal peptide spans 1 to 29; sequence MDKVQSGFLILFLFLMECQLHLCLPYADG. At 30 to 100 the chain is on the extracellular side; sequence LHPTGNITGL…IIRHRPALVK (71 aa). A helical membrane pass occupies residues 101–121; that stretch reads VILISSVAFSIALICGMAISY. Over 122–215 the chain is Cytoplasmic; sequence MIYRLAQAEE…ASHNGKMEDL (94 aa). Positions 191–215 are disordered; it reads LKEEQNSVTENKTKNASHNGKMEDL. Over residues 196 to 208 the composition is skewed to polar residues; that stretch reads NSVTENKTKNASH.

It is found in the membrane. This is an uncharacterized protein from Homo sapiens (Human).